The chain runs to 144 residues: Maximins 6/Hv (144 aa).

The first 18 residues, 1-18 (MNFKYIVAVSFLIASGYA), serve as a signal peptide directing secretion. Positions 19-43 (RSEENDVQSLSQREVLEEETLREIR) are excised as a propeptide. Asparagine 70 carries the asparagine amide modification. A propeptide spanning residues 74 to 123 (TAKGHEVMKRLEAVMRDLDSLDHPEEASERETRGFNQEEIANLFTKKEKR) is cleaved from the precursor. Residue isoleucine 143 is modified to Isoleucine amide.

It belongs to the bombinin family. As to expression, expressed by the skin glands.

The protein localises to the secreted. Its function is as follows. Shows antimicrobial activity against bacteria and against the fungus C.albicans. It has little hemolytic activity. Shows antimicrobial activity against bacteria and against the fungus C.albicans. Shows strong hemolytic activity. In Bombina maxima (Giant fire-bellied toad), this protein is Maximins 6/Hv.